A 365-amino-acid polypeptide reads, in one-letter code: WAT1-related protein At4g01430 (365 aa).

Helical transmembrane passes span W7–V27, I39–W59, F76–Y96, T100–F120, A132–F152, W183–F203, Y216–Y236, F250–T270, V280–I300, and L305–W325. An EamA 1 domain is found at M20–T151. The EamA 2 domain occupies Y216–L324. Residues L339–V365 are disordered. The span at K348–V365 shows a compositional bias: basic and acidic residues.

This sequence belongs to the drug/metabolite transporter (DMT) superfamily. Plant drug/metabolite exporter (P-DME) (TC 2.A.7.4) family.

Its subcellular location is the membrane. This chain is WAT1-related protein At4g01430, found in Arabidopsis thaliana (Mouse-ear cress).